The chain runs to 120 residues: NADH-ubiquinone oxidoreductase chain 3 (120 aa).

Helical transmembrane passes span 7 to 27 (FVYI…LFFL), 62 to 82 (FYLV…LFPF), and 89 to 109 (MTLL…IGFI).

Belongs to the complex I subunit 3 family.

The protein localises to the mitochondrion membrane. The enzyme catalyses a ubiquinone + NADH + 5 H(+)(in) = a ubiquinol + NAD(+) + 4 H(+)(out). Core subunit of the mitochondrial membrane respiratory chain NADH dehydrogenase (Complex I) that is believed to belong to the minimal assembly required for catalysis. Complex I functions in the transfer of electrons from NADH to the respiratory chain. The immediate electron acceptor for the enzyme is believed to be ubiquinone. This Dictyostelium discoideum (Social amoeba) protein is NADH-ubiquinone oxidoreductase chain 3 (nad3).